Here is a 539-residue protein sequence, read N- to C-terminus: MTKNNTNRHYSLRKLKTGTASVAVALTVLGAGLVVNTNEVSAVATRSQTDTLEKVQERADKFEIENNTLKLKNSDLSFNNKALKDHNDELTEELSNAKEKLRKNDKSLSEKASKIQELEARKADLEKALEGAMNFSTADSAKIKTLEAEKAALAARKADLEKALEGAMNFSTADSAKIKTLEAEKAALEARQAELEKALEGAMNFSTADSAKIKTLEAEKAALAARKADLEKALEGAMNFSTADSAKIKTLEAEKAALEARQAELEKALEGAMNFSTADSAKIKTLEAEKAALEAEKADLEHQSQVLNANRQSLRRDLDASREAKKQLEAEHQKLEEQNKISEASRQSLRRDLDASREAKKQLEAEHQKLEEQNKISEASRQSLRRDLDASREAKKQVEKALEEANSKLAALEKLNKELEESKKLTEKEKAELQAKLEAEAKALKEKLAKQAEELAKLRAGKASDSQTPDAKPGNKAVPGKGQAPQAGTKPNQNKAPMKETKRQLPSTGETANPFFTAAALTVMATAGVAAVVKRKEEN.

The first 42 residues, 1-42 (MTKNNTNRHYSLRKLKTGTASVAVALTVLGAGLVVNTNEVSA), serve as a signal peptide directing secretion. An A-1 repeat occupies 118 to 152 (LEARKADLEKALEGAMNFSTADSAKIKTLEAEKAA). Residues 118-301 (LEARKADLEK…ALEAEKADLE (184 aa)) are 5.3 X 35 AA tandem repeats, A-type. Residues 153-187 (LAARKADLEKALEGAMNFSTADSAKIKTLEAEKAA) form an A-2 repeat. An A-3 repeat occupies 188–222 (LEARQAELEKALEGAMNFSTADSAKIKTLEAEKAA). An A-4 repeat occupies 223–257 (LAARKADLEKALEGAMNFSTADSAKIKTLEAEKAA). The stretch at 258–292 (LEARQAELEKALEGAMNFSTADSAKIKTLEAEKAA) is one A-5 repeat. An A-6; truncated repeat occupies 293-297 (LEAEK). Positions 297-401 (KADLEHQSQV…REAKKQVEKA (105 aa)) are disordered. 3 C repeats span residues 298 to 332 (ADLE…EAEH), 333 to 367 (QKLE…EAEH), and 368 to 402 (QKLE…EKAL). The segment covering 303-312 (QSQVLNANRQ) has biased composition (polar residues). Composition is skewed to basic and acidic residues over residues 314 to 340 (LRRD…EQNK), 349 to 375 (LRRD…EQNK), and 384 to 401 (LRRD…VEKA). 4 D repeats span residues 435 to 440 (AKLEAE), 441 to 446 (AKALKE), 449 to 454 (AKQAEE), and 456 to 461 (AKLRAG). Residues 456–511 (AKLRAGKASDSQTPDAKPGNKAVPGKGQAPQAGTKPNQNKAPMKETKRQLPSTGET) are disordered. Positions 505–509 (LPSTG) match the LPXTG sorting signal motif. Thr508 bears the Pentaglycyl murein peptidoglycan amidated threonine mark. A propeptide spans 509–539 (GETANPFFTAAALTVMATAGVAAVVKRKEEN) (removed by sortase).

The protein belongs to the M protein family.

Its subcellular location is the secreted. It is found in the cell wall. Its function is as follows. This protein is one of the different antigenic serotypes of protein M. Protein M is closely associated with virulence of the bacterium and can render the organism resistant to phagocytosis. The protein is M protein, serotype 24 (emm24) of Streptococcus pyogenes.